The sequence spans 471 residues: Glutamate--tRNA ligase (471 aa).

Positions 9 to 19 (PSPTGYLHVGG) match the 'HIGH' region motif. Zn(2+)-binding residues include cysteine 98, cysteine 100, cysteine 125, and histidine 127. A 'KMSKS' region motif is present at residues 237 to 241 (KLSKR). Residue lysine 240 coordinates ATP.

It belongs to the class-I aminoacyl-tRNA synthetase family. Glutamate--tRNA ligase type 1 subfamily. In terms of assembly, monomer. It depends on Zn(2+) as a cofactor.

It localises to the cytoplasm. It carries out the reaction tRNA(Glu) + L-glutamate + ATP = L-glutamyl-tRNA(Glu) + AMP + diphosphate. Catalyzes the attachment of glutamate to tRNA(Glu) in a two-step reaction: glutamate is first activated by ATP to form Glu-AMP and then transferred to the acceptor end of tRNA(Glu). This is Glutamate--tRNA ligase from Salmonella paratyphi A (strain ATCC 9150 / SARB42).